A 227-amino-acid chain; its full sequence is Nucleoside triphosphate pyrophosphatase (227 aa).

D77 functions as the Proton acceptor in the catalytic mechanism.

The protein belongs to the Maf family. It depends on a divalent metal cation as a cofactor.

The protein resides in the cytoplasm. It catalyses the reaction a ribonucleoside 5'-triphosphate + H2O = a ribonucleoside 5'-phosphate + diphosphate + H(+). The catalysed reaction is a 2'-deoxyribonucleoside 5'-triphosphate + H2O = a 2'-deoxyribonucleoside 5'-phosphate + diphosphate + H(+). Functionally, nucleoside triphosphate pyrophosphatase. May have a dual role in cell division arrest and in preventing the incorporation of modified nucleotides into cellular nucleic acids. This is Nucleoside triphosphate pyrophosphatase from Rickettsia typhi (strain ATCC VR-144 / Wilmington).